The primary structure comprises 301 residues: Homoserine O-acetyltransferase (301 aa).

The active-site Acyl-thioester intermediate is the Cys142. Substrate-binding residues include Lys163 and Ser192. His235 serves as the catalytic Proton acceptor. The active site involves Glu237. Substrate is bound at residue Arg249.

This sequence belongs to the MetA family.

It localises to the cytoplasm. It catalyses the reaction L-homoserine + acetyl-CoA = O-acetyl-L-homoserine + CoA. Its pathway is amino-acid biosynthesis; L-methionine biosynthesis via de novo pathway; O-acetyl-L-homoserine from L-homoserine: step 1/1. Functionally, transfers an acetyl group from acetyl-CoA to L-homoserine, forming acetyl-L-homoserine. The sequence is that of Homoserine O-acetyltransferase from Clostridium acetobutylicum (strain ATCC 824 / DSM 792 / JCM 1419 / IAM 19013 / LMG 5710 / NBRC 13948 / NRRL B-527 / VKM B-1787 / 2291 / W).